Reading from the N-terminus, the 169-residue chain is Ribosome maturation factor RimM (169 aa).

The region spanning 96-166 (EDEFYFADLI…AVVVRPVEVE (71 aa)) is the PRC barrel domain.

The protein belongs to the RimM family. Binds ribosomal protein uS19.

The protein resides in the cytoplasm. An accessory protein needed during the final step in the assembly of 30S ribosomal subunit, possibly for assembly of the head region. Essential for efficient processing of 16S rRNA. May be needed both before and after RbfA during the maturation of 16S rRNA. It has affinity for free ribosomal 30S subunits but not for 70S ribosomes. This chain is Ribosome maturation factor RimM, found in Acidiphilium cryptum (strain JF-5).